A 313-amino-acid chain; its full sequence is Protoheme IX farnesyltransferase (313 aa).

The next 9 helical transmembrane spans lie at 22 to 42 (FALL…VGLM), 46 to 66 (IGVH…GGGA), 98 to 118 (GEAL…LALA), 121 to 141 (VFAG…YTMW), 150 to 170 (IVIG…AATG), 177 to 197 (WLMF…LALF), 223 to 243 (ILVY…TSVG), 246 to 266 (IYLT…VQIW), and 284 to 304 (FFKL…AEAL).

This sequence belongs to the UbiA prenyltransferase family. Protoheme IX farnesyltransferase subfamily. In terms of assembly, interacts with CtaA.

It localises to the cell inner membrane. The catalysed reaction is heme b + (2E,6E)-farnesyl diphosphate + H2O = Fe(II)-heme o + diphosphate. It functions in the pathway porphyrin-containing compound metabolism; heme O biosynthesis; heme O from protoheme: step 1/1. In terms of biological role, converts heme B (protoheme IX) to heme O by substitution of the vinyl group on carbon 2 of heme B porphyrin ring with a hydroxyethyl farnesyl side group. This chain is Protoheme IX farnesyltransferase, found in Ruegeria sp. (strain TM1040) (Silicibacter sp.).